The following is a 367-amino-acid chain: C-C chemokine receptor type 6 (367 aa).

At 1–39 (MNSTESYFGTDDYDNTEYYSIPPDHGPCSLEEVRNFTKV) the chain is on the extracellular side. N-linked (GlcNAc...) asparagine glycans are attached at residues asparagine 2 and asparagine 35. Residues 40–66 (FVPIAYSLICVFGLLGNIMVVMTFAFY) traverse the membrane as a helical segment. The Cytoplasmic portion of the chain corresponds to 67 to 75 (KKARSMTDV). Residues 76–96 (YLLNMAITDILFVLTLPFWAV) form a helical membrane-spanning segment. Topologically, residues 97 to 111 (THATNTWVFSDALCK) are extracellular. Cysteine 110 and cysteine 189 are joined by a disulfide. The helical transmembrane segment at 112-133 (LMKGTYAVNFNCGMLLLACISM) threads the bilayer. Over 134–151 (DRYIAIVQATKSFRVRSR) the chain is Cytoplasmic. The helical transmembrane segment at 152 to 172 (TLTHSKVICVAVWFISIIISS) threads the bilayer. Topologically, residues 173 to 203 (PTFIFNKKYELQDRDVCEPRYRSVSEPITWK) are extracellular. Residues 204-230 (LLGMGLELFFGFFTPLLFMVFCYLFII) form a helical membrane-spanning segment. At 231–246 (KTLVQAQNSKRHRAIR) the chain is on the cytoplasmic side. Residues 247–271 (VVIAVVLVFLACQIPHNMVLLVTAV) traverse the membrane as a helical segment. Residues 272–295 (NTGKVGRSCSTEKVLAYTRNVAEV) are Extracellular-facing. Residues 296 to 313 (LAFLHCCLNPVLYAFIGQ) traverse the membrane as a helical segment. At 314–367 (KFRNYFMKIMKDVWCMRRKNKMPGFLCARVYSESYISRQTSETVENDNASSFTM) the chain is on the cytoplasmic side.

The protein belongs to the G-protein coupled receptor 1 family. In terms of tissue distribution, sperm. Mainly localized in the principal piece and neck region of the tail but is also found in the acrosomal region in a small percentage of sperm cells. Expressed in natural regulatory T cells (nTregs) and a subset of early thymocyte progenitor double-negative 1 (DN1) cells. Expressed in memory B cells. Expressed by IL17 producing helper T-cells (Th17), type 1 effector cells (Th1), type 2 effector cells (Th2) and regulatory T-cells (Treg) (at protein level). Expressed by Th17 cells in spleen, Peyers patches, and lamina propria of small and large intestine. Highly expressed in testis, lung, colon, and dendritic cells.

It localises to the cell membrane. Its subcellular location is the cell surface. In terms of biological role, receptor for the C-C type chemokine CCL20. Binds to CCL20 and subsequently transduces a signal by increasing the intracellular calcium ion levels. Although CCL20 is its major ligand it can also act as a receptor for non-chemokine ligands such as beta-defensins. Binds to defensin DEFB1 leading to increase in intracellular calcium ions and cAMP levels. Its binding to DEFB1 is essential for the function of DEFB1 in regulating sperm motility and bactericidal activity. Binds to defensins DEFB4 and DEFB4A/B and mediates their chemotactic effects. The ligand-receptor pair CCL20-CCR6 is responsible for the chemotaxis of dendritic cells (DC), effector/memory T-cells and B-cells and plays an important role at skin and mucosal surfaces under homeostatic and inflammatory conditions, as well as in pathology, including cancer and various autoimmune diseases. CCR6-mediated signals are essential for immune responses to microbes in the intestinal mucosa and in the modulation of inflammatory responses initiated by tissue insult and trauma. CCR6 is essential for the recruitment of both the pro-inflammatory IL17 producing helper T-cells (Th17) and the regulatory T-cells (Treg) to sites of inflammation. Required for the normal migration of Th17 cells in Peyers patches and other related tissue sites of the intestine and plays a role in regulating effector T-cell balance and distribution in inflamed intestine. Plays an important role in the coordination of early thymocyte precursor migration events important for normal subsequent thymocyte precursor development, but is not required for the formation of normal thymic natural regulatory T-cells (nTregs). Required for optimal differentiation of DN2 and DN3 thymocyte precursors. Essential for B-cell localization in the subepithelial dome of Peyers-patches and for efficient B-cell isotype switching to IgA in the Peyers-patches. Essential for appropriate anatomical distribution of memory B-cells in the spleen and for the secondary recall response of memory B-cells. Positively regulates sperm motility and chemotaxis via its binding to CCL20. The protein is C-C chemokine receptor type 6 (Ccr6) of Mus musculus (Mouse).